The primary structure comprises 206 residues: MLPILLSFEGKKVAVFGCGSVGKRRAKKILKSGGIVDIYSKEFDEEIKKLKESNKNLNLIEIDINQLSDEELKNIIMKYDFIVTAINDEINKRIVKLAKELNKFVNSSTKTEGVNFIIPAYTEVDEVIFSIYTKGKSPLIAKHIRIFVENYLKSTDINMIAYIREFLKETIPKQKDREKILKKIFENEKFREELKKLIEKWENGNH.

NAD(+) contacts are provided by residues Ser-20 to Val-21 and Lys-41 to Glu-46.

It belongs to the precorrin-2 dehydrogenase / sirohydrochlorin ferrochelatase family. As to quaternary structure, homodimer.

It carries out the reaction precorrin-2 + NAD(+) = sirohydrochlorin + NADH + 2 H(+). Its pathway is porphyrin-containing compound metabolism; siroheme biosynthesis; sirohydrochlorin from precorrin-2: step 1/1. Its function is as follows. Involved in the archaeal biosynthesis of heme. Catalyzes the oxiation of precorrin-2 into sirohydroclorin. This is Putative precorrin-2 dehydrogenase from Methanocaldococcus jannaschii (strain ATCC 43067 / DSM 2661 / JAL-1 / JCM 10045 / NBRC 100440) (Methanococcus jannaschii).